The following is a 321-amino-acid chain: NADH-ubiquinone oxidoreductase chain 1 (321 aa).

Transmembrane regions (helical) follow at residues Ile-6 to Leu-26, Leu-67 to Ala-87, Leu-103 to Gly-123, Ile-143 to Phe-163, Pro-174 to Ala-194, Ala-220 to Leu-240, Ala-256 to Val-276, and Phe-296 to Gly-316.

The protein belongs to the complex I subunit 1 family.

It is found in the mitochondrion inner membrane. It carries out the reaction a ubiquinone + NADH + 5 H(+)(in) = a ubiquinol + NAD(+) + 4 H(+)(out). Functionally, core subunit of the mitochondrial membrane respiratory chain NADH dehydrogenase (Complex I) that is believed to belong to the minimal assembly required for catalysis. Complex I functions in the transfer of electrons from NADH to the respiratory chain. The immediate electron acceptor for the enzyme is believed to be ubiquinone. The protein is NADH-ubiquinone oxidoreductase chain 1 (MT-ND1) of Alligator mississippiensis (American alligator).